The following is an 825-amino-acid chain: MTEGIRARGPRSSSVNSVPLILDIEDFKGDFSFDALFGNLVNDLLPSFLDEEADSGDGHGNIAGVDGLTNGHLRGQSAPLSSAPFFPEVDGLLSLFKDACKELVDLRKQVDGRLNTLKKEVSTQDSKHRKTLTEIEKGVDGLFESFARLDGRISSVGQTAAKIGDHLQSADAQRETASQTIDLIKYLMEFNGSPGDLMELSALFSDDSRVAEAASIAQKLRSFAEEDIGRQGASAAAGNATPGRGLEVAVANLQDYCNELENRLLSRFDAASQRRDLSTMSECAKILSQFNRGTSAMQHYVATRPMFIDVEVMNSDIRLVLGDHGSQPSPSNVARGLSALFKEITDTVRKEAATITAVFPTPNEVMAILVQRVLEQRVTGILDKILAKPSLMSPPPVQEGGLLLYLRMLAVAYERTQELAKDLRAVGCGDLDVEDLTESLFSSHKDEYPEHERASLKQLYQAKMEELRAESQQVSESSGTIGRSKGASISSSLQQISVTVVTDFVRWNEEAITRCTLFSSQPATLAANVKAIFTCLLDQVSVYITEGLERARDSLSEAAALRERFVLGRRVAAAAASAAEAAAAAGESSFKSFMVAVQRCGSSVAIVQQYFANSISRLLLPVDGAHAASCEEMSTALSKAEAAAYKGLQQCIETVMAEVDRLLSSEQKSTDYRSTDDGIASDHRPTNACIRVVAYLSRVLESAFTALEGLNKQAFLTELGNRLEKLLLTHWQKFTFNPSGGLRLKRDLNEYVGFVKSFGAPSVDEKFELLGIIANVFIVAPDSLPTLFEGSPSIRKDAQRFIQLREDYKSAKLATKLSSLWPSLS.

Residues 244 to 266 (RGLEVAVANLQDYCNELENRLLS) are a coiled coil.

Belongs to the SEC10 family. As to quaternary structure, the exocyst complex is composed of SEC3, SEC5, SEC6, SEC8, SEC10, EXO70A1 and EXO84B. Interacts with EXO84B. Binds to EXO70E2. Binds directly to B1L. In terms of tissue distribution, expressed in seedlings, roots, leaves and flowers.

The protein resides in the cytoplasm. The protein localises to the cytosol. It is found in the secreted. Its subcellular location is the extracellular exosome. Functionally, component of the exocyst complex involved in the docking of exocytic vesicles with fusion sites on the plasma membrane during regulated or polarized secretion. Involved in polarized cell growth and organ morphogenesis. During cytokinesis, involved in cell plate initiation, cell plate maturation and formation of new primary cell wall. The protein is Exocyst complex component SEC10a of Arabidopsis thaliana (Mouse-ear cress).